We begin with the raw amino-acid sequence, 319 residues long: uncharacterized protein (319 aa).

Residues 1-23 (MFPFRRNVLAFAALLALSSPVLA) form the signal peptide.

To H.influenzae HI_0755.

This is an uncharacterized protein from Escherichia coli (strain K12).